A 309-amino-acid polypeptide reads, in one-letter code: Ornithine carbamoyltransferase (309 aa).

Carbamoyl phosphate is bound by residues 51–54, glutamine 78, arginine 102, and 129–132; these read STRT and HPVQ. Residues asparagine 160, aspartate 224, and 228–229 contribute to the L-ornithine site; that span reads SM. Carbamoyl phosphate-binding positions include 264–265 and arginine 292; that span reads CL.

The protein belongs to the aspartate/ornithine carbamoyltransferase superfamily. OTCase family.

Its subcellular location is the cytoplasm. It catalyses the reaction carbamoyl phosphate + L-ornithine = L-citrulline + phosphate + H(+). It participates in amino-acid biosynthesis; L-arginine biosynthesis; L-arginine from L-ornithine and carbamoyl phosphate: step 1/3. Functionally, reversibly catalyzes the transfer of the carbamoyl group from carbamoyl phosphate (CP) to the N(epsilon) atom of ornithine (ORN) to produce L-citrulline. The protein is Ornithine carbamoyltransferase of Campylobacter fetus subsp. fetus (strain 82-40).